The following is a 279-amino-acid chain: MSIISPQDVKKLREETNAGFGDCKKALSVAGGDFELAKKKLREMGIASAEKRLDRDAKEGRVFSYSNNIYAGLLLVSCETDFVALNHNFVNFGNSLIKELVESGIDSLTTSQELELKNLAATIKENIQVKKIFITKIQSNEFVKIYLHGEQSKIGVLVKLKVNDFSKTEDKIFKNFAMDLALHVAAFAPVYLRNDDVCPNYIKEQEEIFTKQLESSGKPESIIKGIVAGKIKKHLAEISLLEQSFVKNDKITVKEMLEEISKAISSKVEMVEFKYLRIG.

An involved in Mg(2+) ion dislocation from EF-Tu region spans residues 80–83 (TDFV).

It belongs to the EF-Ts family.

Its subcellular location is the cytoplasm. Associates with the EF-Tu.GDP complex and induces the exchange of GDP to GTP. It remains bound to the aminoacyl-tRNA.EF-Tu.GTP complex up to the GTP hydrolysis stage on the ribosome. The sequence is that of Elongation factor Ts (tsf) from Borreliella burgdorferi (strain ATCC 35210 / DSM 4680 / CIP 102532 / B31) (Borrelia burgdorferi).